A 353-amino-acid chain; its full sequence is UPF0283 membrane protein YcjF (353 aa).

The Periplasmic segment spans residues 1–69 (MTEPLKPRID…LRPKRSLWRK (69 aa)). A helical transmembrane segment spans residues 70–90 (MVMGGLALFGASVVGQGVQWT). The Cytoplasmic segment spans residues 91 to 99 (MNAWQTQDW). The helical transmembrane segment at 100–120 (VALGGCAAGALIIGAGVGSVV) threads the bilayer. The Periplasmic segment spans residues 121–212 (TEWRRLWRLR…ARREISRSAA (92 aa)). A helical transmembrane segment spans residues 213–233 (ESTLMIAVSPLALVDMAFIAW). Residues 234–353 (RNLRLINRIA…LQKGKTPSEK (120 aa)) are Cytoplasmic-facing.

The protein belongs to the UPF0283 family.

The protein resides in the cell inner membrane. This is UPF0283 membrane protein YcjF (ycjF) from Escherichia coli O157:H7.